Consider the following 82-residue polypeptide: Exodeoxyribonuclease 7 small subunit (82 aa).

It belongs to the XseB family. In terms of assembly, heterooligomer composed of large and small subunits.

Its subcellular location is the cytoplasm. The enzyme catalyses Exonucleolytic cleavage in either 5'- to 3'- or 3'- to 5'-direction to yield nucleoside 5'-phosphates.. Its function is as follows. Bidirectionally degrades single-stranded DNA into large acid-insoluble oligonucleotides, which are then degraded further into small acid-soluble oligonucleotides. The polypeptide is Exodeoxyribonuclease 7 small subunit (Mycobacterium avium (strain 104)).